Consider the following 103-residue polypeptide: Histone H4 (103 aa).

The segment covering 1-14 (MSGRGKGGKGLGKG) has biased composition (gly residues). The segment at 1-20 (MSGRGKGGKGLGKGGAKRHR) is disordered. Position 2 is an N-acetylserine (Ser-2). An N6-acetyllysine modification is found at Lys-17. Residues 17–21 (KRHRK) mediate DNA binding. At Lys-21 the chain carries N6-methyllysine.

This sequence belongs to the histone H4 family. As to quaternary structure, the nucleosome is a histone octamer containing two molecules each of H2A, H2B, H3 and H4 assembled in one H3-H4 heterotetramer and two H2A-H2B heterodimers. The octamer wraps approximately 147 bp of DNA.

It is found in the nucleus. The protein localises to the chromosome. Its function is as follows. Core component of nucleosome. Nucleosomes wrap and compact DNA into chromatin, limiting DNA accessibility to the cellular machineries which require DNA as a template. Histones thereby play a central role in transcription regulation, DNA repair, DNA replication and chromosomal stability. DNA accessibility is regulated via a complex set of post-translational modifications of histones, also called histone code, and nucleosome remodeling. The polypeptide is Histone H4 (Eucalyptus globulus (Tasmanian blue gum)).